The chain runs to 575 residues: MSKLNPRVAHNPVLSRIIESGRTNLPSGITSAGSLSAYAQAAAVTIRDNRDREKREIADLNNRLARYVEKVRFLEAQNRVLENDIGLFRQAAHIHTGKVRDYYDAEKTSLATLVREQEAKVSSAKQNIRKLEPEITTAIRTLASSLEHRQRVRSDKKEQLKHLSDLESETAYIKRLINDCDDEKSHLKTEISRIRGEIKRILALRDKERNGFSRSQTAAQDLLKKLNATISTHEIAIREEINKARRDSTDKNREFFHRELHMSMKEIRDQFESDSKKARKTWEEWYKKKITEIKKRSEKFSLTQNQAREEVLRIRSLLNELRTKISDADSMTQALSKRIEDMKFREDEELRMFEQSLTEKELAVTRMRDECAKLSVELETLVENQINLRSEIAHYRKLMEQAENLRTSYQSDFVIDTPSPLMRTSSHHYGSSYSLNVRDTHNKTVHHDNYDISSASTINTQQFRSYGKGDVKIIEHKDESIVIENSNSYKSKDLSNWKINHYVNGALTGTFILPVATHIHPHEKISIHSLKSPNLMDDIVATQIYSFDFSKNTKTVLLDDVDDEVGWYAHVSYSH.

The segment at 1 to 56 is head; that stretch reads MSKLNPRVAHNPVLSRIIESGRTNLPSGITSAGSLSAYAQAAAVTIRDNRDREKRE. Residues 53–406 form the IF rod domain; it reads EKREIADLNN…KLMEQAENLR (354 aa). A coil 1A region spans residues 57-88; it reads IADLNNRLARYVEKVRFLEAQNRVLENDIGLF. Residues 89-102 form a linker 1 region; that stretch reads RQAAHIHTGKVRDY. The interval 103-240 is coil 1B; it reads YDAEKTSLAT…STHEIAIREE (138 aa). Positions 241 to 258 are linker 12; the sequence is INKARRDSTDKNREFFHR. Positions 259-408 are coil 2; sequence ELHMSMKEIR…MEQAENLRTS (150 aa). The interval 409–572 is tail; the sequence is YQSDFVIDTP…DEVGWYAHVS (164 aa). An LTD domain is found at 459–575; that stretch reads NTQQFRSYGK…GWYAHVSYSH (117 aa).

This sequence belongs to the intermediate filament family.

It localises to the cytoplasm. Its function is as follows. Cytoplasmic intermediate filaments provide mechanical strength to cells. Not essential protein. The sequence is that of Intermediate filament protein ifd-1 from Caenorhabditis elegans.